The primary structure comprises 644 residues: Macrolide export ATP-binding/permease protein MacB (644 aa).

One can recognise an ABC transporter domain in the interval 4 to 242 (IECKNINRYF…SNVGRIREKA (239 aa)). ATP is bound at residue 40–47 (GQSGSGKS). Helical transmembrane passes span 270–290 (LLTM…VALG), 524–544 (IALI…LVSV), 574–594 (LICV…SLVF), and 607–627 (AMSV…FGFM).

Belongs to the ABC transporter superfamily. Macrolide exporter (TC 3.A.1.122) family. In terms of assembly, homodimer.

Its subcellular location is the cell inner membrane. Functionally, non-canonical ABC transporter that contains transmembrane domains (TMD), which form a pore in the inner membrane, and an ATP-binding domain (NBD), which is responsible for energy generation. Confers resistance against macrolides. The protein is Macrolide export ATP-binding/permease protein MacB of Neisseria meningitidis serogroup B (strain ATCC BAA-335 / MC58).